Consider the following 109-residue polypeptide: Nucleoid-associated protein VV2410 (109 aa).

The disordered stretch occupies residues Met1–Gln22.

It belongs to the YbaB/EbfC family. In terms of assembly, homodimer.

It localises to the cytoplasm. It is found in the nucleoid. Functionally, binds to DNA and alters its conformation. May be involved in regulation of gene expression, nucleoid organization and DNA protection. In Vibrio vulnificus (strain YJ016), this protein is Nucleoid-associated protein VV2410.